Here is a 127-residue protein sequence, read N- to C-terminus: Holo-[acyl-carrier-protein] synthase (127 aa).

2 residues coordinate Mg(2+): Asp-8 and Glu-57.

This sequence belongs to the P-Pant transferase superfamily. AcpS family. The cofactor is Mg(2+).

The protein resides in the cytoplasm. The enzyme catalyses apo-[ACP] + CoA = holo-[ACP] + adenosine 3',5'-bisphosphate + H(+). Its function is as follows. Transfers the 4'-phosphopantetheine moiety from coenzyme A to a Ser of acyl-carrier-protein. The polypeptide is Holo-[acyl-carrier-protein] synthase (Hydrogenovibrio crunogenus (strain DSM 25203 / XCL-2) (Thiomicrospira crunogena)).